The primary structure comprises 211 residues: Dephospho-CoA kinase (211 aa).

In terms of domain architecture, DPCK spans 3 to 206 (VIGLTGGIAT…GGRGRRLPNA (204 aa)). ATP is bound at residue 11 to 16 (ATGKST).

The protein belongs to the CoaE family.

Its subcellular location is the cytoplasm. It catalyses the reaction 3'-dephospho-CoA + ATP = ADP + CoA + H(+). It functions in the pathway cofactor biosynthesis; coenzyme A biosynthesis; CoA from (R)-pantothenate: step 5/5. Functionally, catalyzes the phosphorylation of the 3'-hydroxyl group of dephosphocoenzyme A to form coenzyme A. In Anaeromyxobacter dehalogenans (strain 2CP-C), this protein is Dephospho-CoA kinase.